Here is a 287-residue protein sequence, read N- to C-terminus: Maleylpyruvate hydrolase (287 aa).

Residues glutamate 143, glutamate 145, and aspartate 174 each coordinate a divalent metal cation.

This sequence belongs to the FAH family. Homodimer.

The catalysed reaction is 3-maleylpyruvate + H2O = maleate + pyruvate + H(+). With respect to regulation, activated by Mn(2+). Inhibited by Ni(2+), Cd(2+), Co(2+) or Cu(2+). Its function is as follows. Involved in the degradation of gentisate. Catalyzes the hydrolysis of 3-maleylpyruvate, the ring-cleavage product of gentisate. The sequence is that of Maleylpyruvate hydrolase from Aquipseudomonas alcaligenes (Pseudomonas alcaligenes).